Consider the following 274-residue polypeptide: 3-deoxy-manno-octulosonate cytidylyltransferase (274 aa).

It belongs to the KdsB family.

It localises to the cytoplasm. It catalyses the reaction 3-deoxy-alpha-D-manno-oct-2-ulosonate + CTP = CMP-3-deoxy-beta-D-manno-octulosonate + diphosphate. It functions in the pathway nucleotide-sugar biosynthesis; CMP-3-deoxy-D-manno-octulosonate biosynthesis; CMP-3-deoxy-D-manno-octulosonate from 3-deoxy-D-manno-octulosonate and CTP: step 1/1. It participates in bacterial outer membrane biogenesis; lipopolysaccharide biosynthesis. In terms of biological role, activates KDO (a required 8-carbon sugar) for incorporation into bacterial lipopolysaccharide in Gram-negative bacteria. The chain is 3-deoxy-manno-octulosonate cytidylyltransferase from Bordetella avium (strain 197N).